A 726-amino-acid polypeptide reads, in one-letter code: Tripartite terminase subunit 1 (726 aa).

A C3H1-type zinc finger spans residues 189 to 217 (CMKCYEELTLTPNQGKSLRKRLHGKFCNH). 626–633 (YNDVFGKR) is a binding site for ATP.

This sequence belongs to the herpesviridae TRM1 protein family. In terms of assembly, associates with TRM2 and TRM3 to form the tripartite terminase complex. Interacts with portal protein.

It is found in the host nucleus. Its function is as follows. Component of the molecular motor that translocates viral genomic DNA in empty capsid during DNA packaging. Forms a tripartite terminase complex together with TRM2 and TRM3 in the host cytoplasm. Once the complex reaches the host nucleus, it interacts with the capsid portal vertex. This portal forms a ring in which genomic DNA is translocated into the capsid. TRM1 carries an endonuclease activity that plays an important role for the cleavage of concatemeric viral DNA into unit length genomes. This chain is Tripartite terminase subunit 1, found in Human herpesvirus 6B (strain Z29) (HHV-6 variant B).